Reading from the N-terminus, the 603-residue chain is Protein regulator of cytokinesis 1 (603 aa).

Positions 1-341 (MRRSEVLADE…HLHDAEIVRL (341 aa)) are dimerization. Coiled coils occupy residues 34 to 65 (EQRL…RERL), 96 to 136 (ILQL…DILC), 211 to 246 (SLEN…IREL), 272 to 304 (RNAL…LAQF), and 383 to 463 (GNLL…AEML). Residues 342-466 (RNYYDVHKEL…QTEAEMLYGS (125 aa)) are spectrin-fold. A compositionally biased stretch (basic and acidic residues) spans 447-459 (KQERQLKNKKQTE). The disordered stretch occupies residues 447 to 502 (KQERQLKNKKQTEAEMLYGSTPRTPSKRPGQTPKKSGKMNTTTMSSATPNSSIRPV). Residues 467 to 603 (TPRTPSKRPG…RILNSTNIQS (137 aa)) are unstructured, Arg/Lys rich. T470 is subject to Phosphothreonine; by CDK1. Positions 484-499 (KMNTTTMSSATPNSSI) are enriched in polar residues. Phosphoserine occurs at positions 510 and 568. Position 575 is a phosphothreonine (T575). Residues 583–603 (LSKASRSDATSRILNSTNIQS) form a disordered region. Residues 589 to 603 (SDATSRILNSTNIQS) are compositionally biased toward polar residues. At T599 the chain carries Phosphothreonine; by PLK1.

This sequence belongs to the MAP65/ASE1 family. Homodimer. Interacts with the C-terminal Rho-GAP domain and the basic region of RACGAP1. The interaction with RACGAP1 inhibits its GAP activity towards CDC42 in vitro, which may be required for maintaining normal spindle morphology. Interacts (via N-terminus) with the C-terminus of CENPE (via C-terminus); the interaction occurs during late mitosis. Interacts (via N-terminus) with KIF4A (via C-terminus); the interaction is required for the progression of mitosis. Interacts (via N-terminus) with KIF23 (via C-terminus); the interaction occurs during late mitosis. Interacts with KIF14 and KIF20A. Interacts with PLK1. Interacts with KIF20B. Interacts with CCDC66. Post-translationally, phosphorylation by CDK1 in early mitosis holds PRC1 in an inactive monomeric state, during the metaphase to anaphase transition, PRC1 is dephosphorylated, promoting interaction with KIF4A, which then translocates PRC1 along mitotic spindles to the plus ends of antiparallel interdigitating microtubules. Dephosphorylation also promotes MT-bundling activity by allowing dimerization. Phosphorylation by CDK1 prevents PLK1-binding: upon degradation of CDK1 at anaphase and dephosphorylation, it is then phosphorylated by PLK1, leading to cytokinesis.

The protein localises to the nucleus. It localises to the cytoplasm. It is found in the cytoskeleton. The protein resides in the spindle pole. Its subcellular location is the midbody. In terms of biological role, key regulator of cytokinesis that cross-links antiparrallel microtubules at an average distance of 35 nM. Essential for controlling the spatiotemporal formation of the midzone and successful cytokinesis. Required for KIF14 localization to the central spindle and midbody. Required to recruit PLK1 to the spindle. Stimulates PLK1 phosphorylation of RACGAP1 to allow recruitment of ECT2 to the central spindle. Acts as an oncogene for promoting bladder cancer cells proliferation, apoptosis inhibition and carcinogenic progression. The protein is Protein regulator of cytokinesis 1 of Mus musculus (Mouse).